Reading from the N-terminus, the 141-residue chain is Large ribosomal subunit protein uL11 (141 aa).

This sequence belongs to the universal ribosomal protein uL11 family. Part of the ribosomal stalk of the 50S ribosomal subunit. Interacts with L10 and the large rRNA to form the base of the stalk. L10 forms an elongated spine to which L12 dimers bind in a sequential fashion forming a multimeric L10(L12)X complex. Post-translationally, one or more lysine residues are methylated.

Functionally, forms part of the ribosomal stalk which helps the ribosome interact with GTP-bound translation factors. The protein is Large ribosomal subunit protein uL11 of Sulfurimonas denitrificans (strain ATCC 33889 / DSM 1251) (Thiomicrospira denitrificans (strain ATCC 33889 / DSM 1251)).